The chain runs to 353 residues: DNA-directed RNA polymerase subunit alpha (353 aa).

The tract at residues 1–234 (MVQEKVRVST…DLFIPFLHTE (234 aa)) is alpha N-terminal domain (alpha-NTD). Positions 266–353 (KKIALKSIFI…LAQSIYSESG (88 aa)) are alpha C-terminal domain (alpha-CTD).

The protein belongs to the RNA polymerase alpha chain family. As to quaternary structure, in plastids the minimal PEP RNA polymerase catalytic core is composed of four subunits: alpha, beta, beta', and beta''. When a (nuclear-encoded) sigma factor is associated with the core the holoenzyme is formed, which can initiate transcription.

The protein resides in the plastid. It localises to the chloroplast. It carries out the reaction RNA(n) + a ribonucleoside 5'-triphosphate = RNA(n+1) + diphosphate. In terms of biological role, DNA-dependent RNA polymerase catalyzes the transcription of DNA into RNA using the four ribonucleoside triphosphates as substrates. This is DNA-directed RNA polymerase subunit alpha from Panax ginseng (Korean ginseng).